Here is a 122-residue protein sequence, read N- to C-terminus: Large ribosomal subunit protein uL14 (122 aa).

This sequence belongs to the universal ribosomal protein uL14 family. In terms of assembly, part of the 50S ribosomal subunit. Forms a cluster with proteins L3 and L19. In the 70S ribosome, L14 and L19 interact and together make contacts with the 16S rRNA in bridges B5 and B8.

In terms of biological role, binds to 23S rRNA. Forms part of two intersubunit bridges in the 70S ribosome. The chain is Large ribosomal subunit protein uL14 from Shewanella sp. (strain ANA-3).